The sequence spans 913 residues: Eukaryotic translation initiation factor 3 subunit C (913 aa).

Residues 1 to 44 (MSRFFTTGSDSESESSLSGEELVTKPVGGNYGKQPLLLSEDEED) form a disordered region. Low complexity predominate over residues 8 to 21 (GSDSESESSLSGEE). Phosphoserine occurs at positions 9, 11, 13, 15, 16, 18, and 39. Residue lysine 99 is modified to N6-acetyllysine. Disordered regions lie at residues 157 to 301 (TSYK…GGEW) and 522 to 542 (QLTP…NEGE). Serine 166, serine 178, serine 181, and serine 182 each carry phosphoserine. Positions 166-190 (SADEDAEKNEEDSEGSSDEDEDEDG) are enriched in acidic residues. Over residues 199–216 (KKSEAPSGESRKFLKKMD) the composition is skewed to basic and acidic residues. The segment covering 217–232 (DEDEDSEDSEDDEDWD) has biased composition (acidic residues). Residues 261–278 (PTTDEDKKAAEKKREDKA) are compositionally biased toward basic and acidic residues. Residues 522-531 (QLTPPEGSSK) are compositionally biased toward polar residues. Threonine 524 is modified (phosphothreonine). An N6-acetyllysine modification is found at lysine 643. The PCI domain occupies 673-849 (FHLHINLELL…QTVVMHRTEP (177 aa)). Positions 885–913 (FRDQKDGYRKNEGYMRRGGYRQQQSQTAY) are disordered. Residues 886-899 (RDQKDGYRKNEGYM) are compositionally biased toward basic and acidic residues. A Phosphoserine modification is found at serine 909.

As to quaternary structure, component of the eukaryotic translation initiation factor 3 (eIF-3) complex, which is composed of 13 subunits: EIF3A, EIF3B, EIF3C, EIF3D, EIF3E, EIF3F, EIF3G, EIF3H, EIF3I, EIF3J, EIF3K, EIF3L and EIF3M. The eIF-3 complex appears to include 3 stable modules: module A is composed of EIF3A, EIF3B, EIF3G and EIF3I; module B is composed of EIF3F, EIF3H, and EIF3M; and module C is composed of EIF3C, EIF3D, EIF3E, EIF3K and EIF3L. EIF3C of module C binds EIF3B of module A and EIF3H of module B, thereby linking the three modules. EIF3J is a labile subunit that binds to the eIF-3 complex via EIF3B. The eIF-3 complex interacts with RPS6KB1 under conditions of nutrient depletion. Mitogenic stimulation leads to binding and activation of a complex composed of MTOR and RPTOR, leading to phosphorylation and release of RPS6KB1 and binding of EIF4B to eIF-3. Identified in a HCV IRES-mediated translation complex, at least composed of EIF3C, IGF2BP1, RPS3 and HCV RNA-replicon. Interacts with ALKBH4, IFIT1 and IFIT2. Interacts with BZW2/5MP1. Post-translationally, phosphorylated. Phosphorylation is enhanced upon serum stimulation.

The protein resides in the cytoplasm. Component of the eukaryotic translation initiation factor 3 (eIF-3) complex, which is required for several steps in the initiation of protein synthesis. The eIF-3 complex associates with the 40S ribosome and facilitates the recruitment of eIF-1, eIF-1A, eIF-2:GTP:methionyl-tRNAi and eIF-5 to form the 43S pre-initiation complex (43S PIC). The eIF-3 complex stimulates mRNA recruitment to the 43S PIC and scanning of the mRNA for AUG recognition. The eIF-3 complex is also required for disassembly and recycling of post-termination ribosomal complexes and subsequently prevents premature joining of the 40S and 60S ribosomal subunits prior to initiation. The eIF-3 complex specifically targets and initiates translation of a subset of mRNAs involved in cell proliferation, including cell cycling, differentiation and apoptosis, and uses different modes of RNA stem-loop binding to exert either translational activation or repression. The chain is Eukaryotic translation initiation factor 3 subunit C from Homo sapiens (Human).